Reading from the N-terminus, the 85-residue chain is Small ribosomal subunit protein uS17 (85 aa).

This sequence belongs to the universal ribosomal protein uS17 family. In terms of assembly, part of the 30S ribosomal subunit.

In terms of biological role, one of the primary rRNA binding proteins, it binds specifically to the 5'-end of 16S ribosomal RNA. The protein is Small ribosomal subunit protein uS17 of Desulfosudis oleivorans (strain DSM 6200 / JCM 39069 / Hxd3) (Desulfococcus oleovorans).